Consider the following 630-residue polypeptide: METTPLNSQKVLSECKDREDCQENGVLQKGVPTTADRAEPSQISNGYSAVPSTSAGDEASHSIPAATTTLVAEIRQGERETWGKKMDFLLSVIGYAVDLGNIWRFPYICYQNGGGAFLLPYTIMAIFGGIPLFYMELALGQYHRNGCISIWRKICPIFKGIGYAICIIAFYIASYYNTIIAWALYYLISSLTDRLPWTSCTNSWNTGNCTNYFAQDNITWTLHSTSPAEEFYLRHVLQIHQSKGLQDLGTISWQLTLCIVLIFTVIYFSIWKGVKTSGKVVWVTATFPYIVLSVLLVRGATLPGAWRGVVFYLKPNWQKLLETGVWVDAAAQIFFSLGPGFGVLLAFASYNKFNNNCYQDALVTSVVNCMTSFVSGFVIFTVLGYMAEMRNEDVSEVAKDAGPSLLFITYAEAIANMPASTFFAIIFFLMLITLGLDSTFAGLEGVITAVLDEFPHIWAKRREWFVLIVVITCVLGSLLTLTSGGAYVVTLLEEYATGPAVLTVALIEAVAVSWFYGITQFCSDVKEMLGFSPGWFWRICWVAISPLFLLFIICSFLMSPPQLRLFQYNYPHWSIVLGYCIGMSSVICIPTYIIYRLISTPGTLKERIIKSITPETPTEIPCGDIRMNAV.

At 1–87 (METTPLNSQK…ERETWGKKMD (87 aa)) the chain is on the cytoplasmic side. The interval 23-60 (ENGVLQKGVPTTADRAEPSQISNGYSAVPSTSAGDEAS) is disordered. A compositionally biased stretch (polar residues) spans 41 to 55 (SQISNGYSAVPSTSA). Tyr47 is subject to Phosphotyrosine. Residues 88-112 (FLLSVIGYAVDLGNIWRFPYICYQN) form a helical membrane-spanning segment. Na(+)-binding residues include Gly94, Ala96, Val97, Asp98, and Asn101. Asp98 lines the serotonin pocket. Topologically, residues 113 to 115 (GGG) are extracellular. Residues 116–135 (AFLLPYTIMAIFGGIPLFYM) form a helical membrane-spanning segment. The Cytoplasmic portion of the chain corresponds to 136-160 (ELALGQYHRNGCISIWRKICPIFKG). Tyr142 bears the Phosphotyrosine mark. Residues 161-186 (IGYAICIIAFYIASYYNTIIAWALYY) form a helical membrane-spanning segment. The Extracellular portion of the chain corresponds to 187–252 (LISSLTDRLP…KGLQDLGTIS (66 aa)). Cys200 and Cys209 are oxidised to a cystine. Residues Asn208 and Asn217 are each glycosylated (N-linked (GlcNAc...) asparagine). The helical transmembrane segment at 253-271 (WQLTLCIVLIFTVIYFSIW) threads the bilayer. The Cytoplasmic portion of the chain corresponds to 272 to 277 (KGVKTS). Thr276 carries the post-translational modification Phosphothreonine. The chain crosses the membrane as a helical span at residues 278 to 297 (GKVVWVTATFPYIVLSVLLV). The Extracellular portion of the chain corresponds to 298–324 (RGATLPGAWRGVVFYLKPNWQKLLETG). The chain crosses the membrane as a helical span at residues 325–347 (VWVDAAAQIFFSLGPGFGVLLAF). Residue Ser336 participates in Na(+) binding. Over 348 to 360 (ASYNKFNNNCYQD) the chain is Cytoplasmic. A helical membrane pass occupies residues 361-380 (ALVTSVVNCMTSFVSGFVIF). Residue Asn368 coordinates Na(+). The Extracellular segment spans residues 381 to 421 (TVLGYMAEMRNEDVSEVAKDAGPSLLFITYAEAIANMPAST). A helical membrane pass occupies residues 422–443 (FFAIIFFLMLITLGLDSTFAGL). Residues Leu434, Asp437, and Ser438 each contribute to the Na(+) site. Serotonin is bound at residue Thr439. Residues 444–463 (EGVITAVLDEFPHIWAKRRE) are Cytoplasmic-facing. The helical transmembrane segment at 464–483 (WFVLIVVITCVLGSLLTLTS) threads the bilayer. Residues 484–494 (GGAYVVTLLEE) are Extracellular-facing. Residues Glu494 and Tyr495 each coordinate serotonin. A helical membrane pass occupies residues 495 to 516 (YATGPAVLTVALIEAVAVSWFY). Residues 517–538 (GITQFCSDVKEMLGFSPGWFWR) lie on the Cytoplasmic side of the membrane. The helical transmembrane segment at 539–558 (ICWVAISPLFLLFIICSFLM) threads the bilayer. Serotonin contacts are provided by Phe556 and Ser559. Residues 559–574 (SPPQLRLFQYNYPHWS) lie on the Extracellular side of the membrane. A helical membrane pass occupies residues 575–595 (IVLGYCIGMSSVICIPTYIIY). Over 596 to 630 (RLISTPGTLKERIIKSITPETPTEIPCGDIRMNAV) the chain is Cytoplasmic. Positions 616 to 624 (TPTEIPCGD) are interaction with RAB4A.

Belongs to the sodium:neurotransmitter symporter (SNF) (TC 2.A.22) family. SLC6A4 subfamily. Monomer or homooligomer. Interacts with TGFB1I1. Interacts with SEC23A, SEC24C and PATJ. Interacts with NOS1; the interaction may diminish the cell surface localization of SERT in the brain and, correspondingly, reduce serotonin reuptake. Interacts (via C-terminus) with SCAMP2; the interaction is direct and retains transporter molecules intracellularly. Interacts with filamentous actin and STX1A. Interacts (via the N-terminus) with STX1A (via the H3 domain); this interaction regulates SLC4A6 channel conductance. Interacts with ITGAV:ITGB3. Interacts (via C-terminus) with ITGB3; this interaction regulates SLC6A4 trafficking. Post-translationally, phosphorylation at Thr-276 increases 5-HT uptake and is required for cGMP-mediated SERT regulation. As to expression, expressed in the intestinal crypt epithelial cells and myenteric neurons of the small intestine (at protein level). Expressed in the brain.

The protein localises to the cell membrane. It localises to the endomembrane system. Its subcellular location is the endosome membrane. It is found in the synapse. The protein resides in the cell junction. The protein localises to the focal adhesion. It localises to the cell projection. Its subcellular location is the neuron projection. It carries out the reaction serotonin(out) + K(+)(in) + Na(+)(out) + H(+)(in) = serotonin(in) + K(+)(out) + Na(+)(in) + H(+)(out). Functionally, serotonin transporter that cotransports serotonin with one Na(+) ion in exchange for one K(+) ion and possibly one proton in an overall electroneutral transport cycle. Transports serotonin across the plasma membrane from the extracellular compartment to the cytosol thus limiting serotonin intercellular signaling. Essential for serotonin homeostasis in the central nervous system. In the developing somatosensory cortex, acts in glutamatergic neurons to control serotonin uptake and its trophic functions accounting for proper spatial organization of cortical neurons and elaboration of sensory circuits. In the mature cortex, acts primarily in brainstem raphe neurons to mediate serotonin uptake from the synaptic cleft back into the pre-synaptic terminal thus terminating serotonin signaling at the synapse. Modulates mucosal serotonin levels in the gastrointestinal tract through uptake and clearance of serotonin in enterocytes. Required for enteric neurogenesis and gastrointestinal reflexes. Regulates blood serotonin levels by ensuring rapid high affinity uptake of serotonin from plasma to platelets, where it is further stored in dense granules via vesicular monoamine transporters and then released upon stimulation. Mechanistically, the transport cycle starts with an outward-open conformation having Na1(+) and Cl(-) sites occupied. The binding of a second extracellular Na2(+) ion and serotonin substrate leads to structural changes to outward-occluded to inward-occluded to inward-open, where the Na2(+) ion and serotonin are released into the cytosol. Binding of intracellular K(+) ion induces conformational transitions to inward-occluded to outward-open and completes the cycle by releasing K(+) possibly together with a proton bound to Asp-98 into the extracellular compartment. Na1(+) and Cl(-) ions remain bound throughout the transport cycle. Additionally, displays serotonin-induced channel-like conductance for monovalent cations, mainly Na(+) ions. The channel activity is uncoupled from the transport cycle and may contribute to the membrane resting potential or excitability. This chain is Sodium-dependent serotonin transporter (Slc6a4), found in Rattus norvegicus (Rat).